The primary structure comprises 183 residues: Translation initiation factor IF-3 (183 aa).

Belongs to the IF-3 family. Monomer.

It localises to the cytoplasm. IF-3 binds to the 30S ribosomal subunit and shifts the equilibrium between 70S ribosomes and their 50S and 30S subunits in favor of the free subunits, thus enhancing the availability of 30S subunits on which protein synthesis initiation begins. The protein is Translation initiation factor IF-3 of Yersinia pseudotuberculosis serotype O:1b (strain IP 31758).